Here is a 393-residue protein sequence, read N- to C-terminus: NAD(P)H-quinone oxidoreductase subunit H, chloroplastic (393 aa).

This sequence belongs to the complex I 49 kDa subunit family. NDH is composed of at least 16 different subunits, 5 of which are encoded in the nucleus.

It is found in the plastid. The protein localises to the chloroplast thylakoid membrane. It carries out the reaction a plastoquinone + NADH + (n+1) H(+)(in) = a plastoquinol + NAD(+) + n H(+)(out). The enzyme catalyses a plastoquinone + NADPH + (n+1) H(+)(in) = a plastoquinol + NADP(+) + n H(+)(out). Its function is as follows. NDH shuttles electrons from NAD(P)H:plastoquinone, via FMN and iron-sulfur (Fe-S) centers, to quinones in the photosynthetic chain and possibly in a chloroplast respiratory chain. The immediate electron acceptor for the enzyme in this species is believed to be plastoquinone. Couples the redox reaction to proton translocation, and thus conserves the redox energy in a proton gradient. This chain is NAD(P)H-quinone oxidoreductase subunit H, chloroplastic, found in Nicotiana tomentosiformis (Tobacco).